A 438-amino-acid chain; its full sequence is UPF0229 protein R01398 (438 aa).

The interval 55-107 (PARGVNEPAFQPDSNSGERRHVLPGNREFAAGDRIPKRGSGGGAGNAGAGTGQ) is disordered. Residues 93–105 (GSGGGAGNAGAGT) are compositionally biased toward gly residues.

It belongs to the UPF0229 family.

This Rhizobium meliloti (strain 1021) (Ensifer meliloti) protein is UPF0229 protein R01398.